A 307-amino-acid chain; its full sequence is Protein YIF1A (307 aa).

The disordered stretch occupies residues 1 to 42; the sequence is MNFQQQGYRATKPRARASPPTGGPMLFDDTSSGPPPMNNQNY. Topologically, residues 1-148 are cytoplasmic; that stretch reads MNFQQQGYRA…TPRHDVNAPD (148 aa). A helical membrane pass occupies residues 149 to 169; sequence LYIPTMAFITYILLAGMALGI. The Lumenal segment spans residues 170–184; sequence QKRFSPEVLGLCAST. A helical membrane pass occupies residues 185–205; the sequence is ALVWMIIEVLVMLLSLYLLTV. Residues 206 to 213 lie on the Cytoplasmic side of the membrane; sequence HTDLSTFD. A helical transmembrane segment spans residues 214–236; the sequence is LVAYSGYKYVGMILTVFCGLLFG. The Lumenal segment spans residues 237-239; it reads SDG. A helical membrane pass occupies residues 240 to 259; it reads YYVALAWSSCALMFFIVRSL. The Cytoplasmic portion of the chain corresponds to 260–285; it reads KMKILSSISADSMGAGASAKPRFRLY. The chain crosses the membrane as a helical span at residues 286-306; the sequence is ITVASAAFQPFIIYWLTAHLV.

Belongs to the YIF1 family.

It localises to the endoplasmic reticulum membrane. Its subcellular location is the golgi apparatus membrane. The protein resides in the endoplasmic reticulum-Golgi intermediate compartment membrane. In terms of biological role, possible role in transport between endoplasmic reticulum and Golgi. The polypeptide is Protein YIF1A (yif1a) (Danio rerio (Zebrafish)).